A 58-amino-acid chain; its full sequence is Small ribosomal subunit protein bS21 (58 aa).

Belongs to the bacterial ribosomal protein bS21 family.

The polypeptide is Small ribosomal subunit protein bS21 (Staphylococcus saprophyticus subsp. saprophyticus (strain ATCC 15305 / DSM 20229 / NCIMB 8711 / NCTC 7292 / S-41)).